The sequence spans 520 residues: MSSPLASLSKTRKVPLPSEPMNPGRRGIRIYGDEDEVDMLSDGCGSEEKISVPSCYGGIGAPVSRQVPASHDSELMAFMTRKLWDLEQQVKAQTDEILSKDQKIAALEDLVQTLRPHPAEATLQRQEELETMCVQLQRQVREMERFLSDYGLQWVGEPMDQEDSESKTVSEHGERDWMTAKKFWKPGDSLAPPEVDFDRLLASLQDLSELVVEGDTQVTPVPGGARLRTLEPIPLKLYRNGIMMFDGPFQPFYDPSTQRCLRDILDGFFPSELQRLYPNGVPFKVSDLRNQVYLEDGLDPFPGEGRVVGRQLMHKALDRVEEHPGSRMTAEKFLNRLPKFVIRQGEVIDIRGPIRDTLQNCCPLPARIQEIVVETPTLAAERERSQESPNTPAPPLSMLRIKSENGEQAFLLMMQPDNTIGDVRALLAQARVMDASAFEIFSTFPPTLYQDDTLTLQAAGLVPKAALLLRARRAPKSSLKFSPGPCPGPGPGPSPGPGPGPSPGPGPGPSPCPGPSPSPQ.

The interval 1 to 26 (MSSPLASLSKTRKVPLPSEPMNPGRR) is disordered. The stretch at 76 to 149 (MAFMTRKLWD…VREMERFLSD (74 aa)) forms a coiled coil. Residues 230–294 (LEPIPLKLYR…VSDLRNQVYL (65 aa)) form the SEP domain. Positions 392–469 (PAPPLSMLRI…GLVPKAALLL (78 aa)) constitute a UBX domain. Positions 476 to 520 (KSSLKFSPGPCPGPGPGPSPGPGPGPSPGPGPGPSPCPGPSPSPQ) are disordered. Over residues 484-520 (GPCPGPGPGPSPGPGPGPSPGPGPGPSPCPGPSPSPQ) the composition is skewed to pro residues. A run of 3 repeats spans residues 487 to 494 (PGPGPGPS), 495 to 502 (PGPGPGPS), and 503 to 510 (PGPGPGPS). The 3 X 8 AA tandem repeats of P-G-P-G-P-G-P-S stretch occupies residues 487 to 510 (PGPGPGPSPGPGPGPSPGPGPGPS).

In terms of assembly, interacts with GNA12, GNA13, RND1, RND2 and RND3.

Its subcellular location is the cytoplasm. The protein localises to the cytoskeleton. Its function is as follows. May be involved in the reorganization of actin cytoskeleton mediated by RND1, RND2 and RND3. Promotes RHOA activation mediated by GNA12 and GNA13. This Homo sapiens (Human) protein is UBX domain-containing protein 11 (UBXN11).